The primary structure comprises 147 residues: Protein phosphatase 1 regulatory subunit 14B (147 aa).

Over residues Met1–Pro15 the composition is skewed to low complexity. The disordered stretch occupies residues Met1–Lys55. N-acetylalanine is present on Ala2. Residue Ser21 is modified to Phosphoserine. Tyr29 is modified (phosphotyrosine). Ser32 carries the phosphoserine modification. A Phosphothreonine modification is found at Thr57. Residues Asp61–Met103 are a coiled coil.

It belongs to the PP1 inhibitor family. Phosphorylated primarily on Thr-57 by PKC (in vitro). An unknown Ser is also phosphorylated by PKC (in vitro). In terms of tissue distribution, ubiquitous. Highly expressed in testis. Detected at low levels in the other tissues tested. Highly expressed in cardiac muscle, bladder and aorta (at protein level).

The protein localises to the cytoplasm. Inhibitor of PPP1CA. Has over 50-fold higher inhibitory activity when phosphorylated. The polypeptide is Protein phosphatase 1 regulatory subunit 14B (Ppp1r14b) (Mus musculus (Mouse)).